The following is a 703-amino-acid chain: Protein STRUBBELIG-RECEPTOR FAMILY 8 (703 aa).

Positions 1–27 (MAIGDRAMFTVLLLFIASISGFSVVRC) are cleaved as a signal peptide. Residues 28–291 (VTDPSDVQAL…GKGLSGGVVT (264 aa)) lie on the Extracellular side of the membrane. LRR repeat units lie at residues 96–120 (LKSL…LPPN), 122–142 (TSLN…ISAM), 143–165 (GSLS…IFAD), 166–190 (HKSL…LSTV), 192–212 (TLSV…VLSG), 213–233 (LPLK…PKEL), and 234–256 (SSIQ…PQPE). N-linked (GlcNAc...) asparagine glycosylation is found at Asn120, Asn130, Asn149, and Asn178. N-linked (GlcNAc...) asparagine glycosylation occurs at Asn226. Positions 247 to 284 (DNVPASPQPERPGKKETPSGSKKPKIGSEEKSSDSGKG) are disordered. The chain crosses the membrane as a helical span at residues 292 to 312 (GIVFGSLFVAGIIALVLYLCL). At 313–703 (HKKKRKVRGS…PEHEHVDISF (391 aa)) the chain is on the cytoplasmic side. The 278-residue stretch at 395 to 672 (FSQENIIGEG…SEVVQQLVRL (278 aa)) folds into the Protein kinase domain. ATP-binding positions include 401–409 (IGEGSLGRV) and Lys423.

It belongs to the protein kinase superfamily. Ser/Thr protein kinase family. In terms of tissue distribution, expressed in seedlings, roots, stems, leaves, flowers and siliques.

The protein resides in the membrane. This Arabidopsis thaliana (Mouse-ear cress) protein is Protein STRUBBELIG-RECEPTOR FAMILY 8 (SRF8).